Reading from the N-terminus, the 272-residue chain is Large ribosomal subunit protein uL2cz/uL2cy (272 aa).

The segment covering 1-13 has biased composition (polar residues); sequence MHLYKTSTPSTRN. 2 disordered regions span residues 1 to 27 and 222 to 272; these read MHLY…PRNN and NPVD…RRSK.

The protein belongs to the universal ribosomal protein uL2 family. In terms of assembly, part of the 50S ribosomal subunit.

It localises to the plastid. The protein resides in the chloroplast. This Buxus microphylla (Littleleaf boxwood) protein is Large ribosomal subunit protein uL2cz/uL2cy (rpl2-A).